Here is a 353-residue protein sequence, read N- to C-terminus: Quinolinate synthase (353 aa).

Iminosuccinate is bound by residues H47 and S68. A [4Fe-4S] cluster-binding site is contributed by C113. Residues 139–141 and S156 contribute to the iminosuccinate site; that span reads YAN. Residue C200 coordinates [4Fe-4S] cluster. Residues 226 to 228 and T243 contribute to the iminosuccinate site; that span reads HPE. C297 provides a ligand contact to [4Fe-4S] cluster.

Belongs to the quinolinate synthase family. Type 1 subfamily. [4Fe-4S] cluster is required as a cofactor.

It is found in the cytoplasm. The enzyme catalyses iminosuccinate + dihydroxyacetone phosphate = quinolinate + phosphate + 2 H2O + H(+). It functions in the pathway cofactor biosynthesis; NAD(+) biosynthesis; quinolinate from iminoaspartate: step 1/1. Its function is as follows. Catalyzes the condensation of iminoaspartate with dihydroxyacetone phosphate to form quinolinate. The chain is Quinolinate synthase from Yersinia pestis bv. Antiqua (strain Antiqua).